A 162-amino-acid chain; its full sequence is Lectin BRA-3 (162 aa).

The first 24 residues, 1–24 (MQRSEIVQAVTLLVVVFAITTAEC), serve as a signal peptide directing secretion. The region spanning 25 to 152 (TCPGNLDWQE…NKNKNFLCKM (128 aa)) is the C-type lectin domain. 3 disulfide bridges follow: Cys-26–Cys-39, Cys-56–Cys-150, and Cys-125–Cys-142.

In terms of assembly, homotetramer; disulfide-linked. As to expression, coelemic fluid.

Sugar-binding protein which recognizes specific carbohydrate structures and agglutinates a variety of animal cells by binding to cell-surface glycoproteins and glycolipids. Calcium-dependent lectin. Invertebrate lectins may be involved in defense functions. The chain is Lectin BRA-3 from Megabalanus rosa (Acorn barnacle).